The chain runs to 149 residues: Large ribosomal subunit protein bL20m (149 aa).

A mitochondrion-targeting transit peptide spans 1-9 (MVFLSAPLW).

This sequence belongs to the bacterial ribosomal protein bL20 family. As to quaternary structure, component of the mitochondrial ribosome large subunit (39S) which comprises a 16S rRNA and about 50 distinct proteins. Interacts with OXA1L.

The protein resides in the mitochondrion. In Bos taurus (Bovine), this protein is Large ribosomal subunit protein bL20m (MRPL20).